The chain runs to 349 residues: Protein RecA (349 aa).

65-72 (GPESSGKT) lines the ATP pocket.

It belongs to the RecA family.

The protein resides in the cytoplasm. Functionally, can catalyze the hydrolysis of ATP in the presence of single-stranded DNA, the ATP-dependent uptake of single-stranded DNA by duplex DNA, and the ATP-dependent hybridization of homologous single-stranded DNAs. It interacts with LexA causing its activation and leading to its autocatalytic cleavage. The sequence is that of Protein RecA from Vibrio vulnificus (strain CMCP6).